The sequence spans 431 residues: MSTSSSAVSQLKNSPLAGNINYEPTVWSRADALKVNENDPTTTQPLVSADFPVMSDTVFIWDTMPLRELDGTVVSVNGWSVILTLTADRHPDDPQYLDANGRYDIKRDWEDRHGRARMCYWYSRTGKDWIFGGRVMAEGVSPTTREWAGTPILLNDKGDIDLYYTCVTPGAAVAKVRGRIVTSDQGVELKDFTQVKKLFEADGTYYQTEAQNSSWNFRDPSPFIDPNDGKLYMVFEGNVAGERGSHTVGAAELGPVPPGHEDVGGARFQVGCIGLAVAKDLSGEEWEILPPLVTAVGVNDQTERPHYVFQDGKYYLFTISHKFTYADGITGPDGVYGFVGEHLFGPYRPMNASGLVLGNPPEQPFQTYSHCVMPNGLVTSFIDSVPTEGEDYRIGGTEAPTVRILLKGDRSFVQEEYDYGYIPAMKDVQLS.

Sucrose contacts are provided by Trp-61, Asp-62, Ala-148, Arg-218, and Asp-219. Asp-62 acts as the Nucleophile in catalysis. The active-site Proton donor/acceptor is Glu-303.

This sequence belongs to the glycosyl hydrolase 68 family.

The protein localises to the periplasm. It catalyses the reaction [6)-beta-D-fructofuranosyl-(2-&gt;](n) alpha-D-glucopyranoside + sucrose = [6)-beta-D-fructofuranosyl-(2-&gt;](n+1) alpha-D-glucopyranoside + D-glucose. Functionally, catalyzes the synthesis of levan, a fructose polymer, by transferring the fructosyl moiety from sucrose to a growing acceptor molecule. The protein is Levansucrase LscC of Pseudomonas savastanoi pv. glycinea (Pseudomonas syringae pv. glycinea).